A 117-amino-acid polypeptide reads, in one-letter code: Prefoldin subunit beta (117 aa).

Belongs to the prefoldin subunit beta family. Heterohexamer of two alpha and four beta subunits.

The protein resides in the cytoplasm. In terms of biological role, molecular chaperone capable of stabilizing a range of proteins. Seems to fulfill an ATP-independent, HSP70-like function in archaeal de novo protein folding. The sequence is that of Prefoldin subunit beta (pfdB) from Pyrococcus abyssi (strain GE5 / Orsay).